A 120-amino-acid chain; its full sequence is uncharacterized protein (120 aa).

This is an uncharacterized protein from Escherichia coli O6:H1 (strain CFT073 / ATCC 700928 / UPEC).